A 441-amino-acid polypeptide reads, in one-letter code: Velvet complex subunit B (441 aa).

Residues 1-173 (MSTLGQGDFE…SDQGVRLRLR (173 aa)) enclose the Velvet domain. 3 disordered regions span residues 200 to 220 (GYLP…PHHL), 234 to 295 (RSRS…ETDT), and 341 to 396 (MPSP…PSYA). Composition is skewed to low complexity over residues 272–283 (DGASPDSPHPSS) and 361–375 (PAGA…FSPG).

It belongs to the velvet family. VelB subfamily. Component of the heterotrimeric velvet complex composed of laeA, veA and velB; VeA acting as a bridging protein between laeA and velB.

Its subcellular location is the nucleus. It is found in the cytoplasm. Its function is as follows. Component of the velvet transcription factor complex that controls sexual/asexual developmental ratio in response to light, promoting sexual development in the darkness while stimulating asexual sporulation under illumination. The velvet complex acts as a global regulator for secondary metabolite gene expression and is required for the production of chaetoglobosin A. The sequence is that of Velvet complex subunit B from Chaetomium globosum (strain ATCC 6205 / CBS 148.51 / DSM 1962 / NBRC 6347 / NRRL 1970) (Soil fungus).